The chain runs to 429 residues: Guanine nucleotide-binding protein subunit alpha (429 aa).

G2 is lipidated: N-myristoyl glycine. Residue C3 is the site of S-palmitoyl cysteine attachment. The region spanning 40–429 (KGVKLLLLGA…QQNLKKSGIM (390 aa)) is the G-alpha domain. The G1 motif stretch occupies residues 43-56 (KLLLLGAGESGKST). 6 residues coordinate GTP: E51, S52, G53, K54, S55, and T56. S55 contributes to the Mg(2+) binding site. Positions 125-197 (LKQIDADVAG…KDSEQFTRLS (73 aa)) are not present in other G-proteins. Positions 249 to 257 (DILKGRIKT) are G2 motif. L251, T257, G279, N345, K346, D348, and A401 together coordinate GTP. T257 contributes to the Mg(2+) binding site. A G3 motif region spans residues 272–281 (FKVLDAGGQR). The G4 motif stretch occupies residues 341-348 (ILFLNKID). Residues 399–404 (TCATDS) are G5 motif.

This sequence belongs to the G-alpha family. G(q) subfamily. G proteins are composed of 3 units; alpha, beta and gamma. The alpha chain contains the guanine nucleotide binding site. Requires Mg(2+) as cofactor.

In terms of biological role, guanine nucleotide-binding proteins (G proteins) are involved as modulators or transducers in various transmembrane signaling systems. Involved in the mating pathway. The sequence is that of Guanine nucleotide-binding protein subunit alpha (CAG1) from Candida albicans (strain WO-1) (Yeast).